The chain runs to 243 residues: Small ribosomal subunit protein eS4 (243 aa).

Residues 43 to 105 (IPLIYIVRDY…TGEHYRVLPN (63 aa)) form the S4 RNA-binding domain.

Belongs to the eukaryotic ribosomal protein eS4 family. In terms of assembly, part of the 30S ribosomal subunit.

The polypeptide is Small ribosomal subunit protein eS4 (Thermococcus kodakarensis (strain ATCC BAA-918 / JCM 12380 / KOD1) (Pyrococcus kodakaraensis (strain KOD1))).